A 305-amino-acid polypeptide reads, in one-letter code: uncharacterized protein (305 aa).

Residues 267 to 287 are disordered; it reads ADEQEKNWNGGAKKNARAEPA.

This sequence belongs to the DnaB/DnaD family.

This is an uncharacterized protein from Listeria innocua serovar 6a (strain ATCC BAA-680 / CLIP 11262).